A 965-amino-acid chain; its full sequence is Transmembrane channel-like protein 5 (965 aa).

2 stretches are compositionally biased toward polar residues: residues 1-10 (MSSFHKNSSY) and 20-31 (SGSQNHTQNYLR). The segment at 1–235 (MSSFHKNSSY…GAEEGDVYSP (235 aa)) is disordered. Over 1-417 (MSSFHKNSSY…YFSFLRWLLK (417 aa)) the chain is Extracellular. Over residues 61–70 (TNPDYHHSLA) the composition is skewed to basic and acidic residues. Polar residues predominate over residues 166–181 (QGNSYHSGPRSHSNLP). Residue Ser-248 is modified to Phosphoserine. Residues 418-438 (FNIFSFVMNFSFIIIPQFTVG) form a helical membrane-spanning segment. Topologically, residues 439–444 (EKNTLQ) are cytoplasmic. A helical membrane pass occupies residues 445–467 (FTGLEFFTGAGYFRETVMYYGFY). At 468–484 (TNSTIRHRMGGASYNMQ) the chain is on the extracellular side. A helical transmembrane segment spans residues 485–505 (LAYIFTIGACLVICFFSLLFS). Residues 506–578 (MAKYFRNNFI…NQKLTRFSVH (73 aa)) lie on the Cytoplasmic side of the membrane. A helical transmembrane segment spans residues 579–599 (VAAWLVSTGITAACCVAVYYL). At 600-613 (AEYNSEFLKTHKNP) the chain is on the extracellular side. A helical transmembrane segment spans residues 614–634 (GAVLLLPFVVSCINLAVPRFY). At 635 to 657 (SMFRLVERYEIPRQEVYVLLIRN) the chain is on the cytoplasmic side. A helical transmembrane segment spans residues 658-678 (IFLKISIVGILCYYWLNIVAL). At 679–691 (SGEECWETLIGQD) the chain is on the extracellular side. A helical membrane pass occupies residues 692 to 712 (IYRLLLMDFVFSLADSLLGEF). The Cytoplasmic segment spans residues 713 to 747 (LRRLIGMKFITSLSLQEFDIARNVLELIYAQTLAW). A helical transmembrane segment spans residues 748–768 (LGIFFCPLLPFIQMITLFIMF). The Extracellular segment spans residues 769–794 (YVKNVSLMMNFQPPSKAWRASQMITF). A helical membrane pass occupies residues 795–815 (FIFLLFFPSFTGVLCTLAITI). The Cytoplasmic segment spans residues 816–859 (WRLKPSADCGPFRGLPSFIQSIYSWIDTLSHRPGYLWVVWIYQN). Residues 860–880 (LIGSVHFFFILTLIVLIITYL) traverse the membrane as a helical segment. Residues 881 to 965 (YWQITEGRKV…RSMQEENAIA (85 aa)) lie on the Extracellular side of the membrane.

It belongs to the TMC family.

It localises to the membrane. Probable component of an ion channel. Molecular function hasn't been characterized yet. In Rattus norvegicus (Rat), this protein is Transmembrane channel-like protein 5.